The sequence spans 207 residues: Large ribosomal subunit protein uL4 (207 aa).

Residues 49–78 (HAVKNRSAVSGGGRKPWRQKGTGRARQGSI) form a disordered region.

The protein belongs to the universal ribosomal protein uL4 family. As to quaternary structure, part of the 50S ribosomal subunit.

One of the primary rRNA binding proteins, this protein initially binds near the 5'-end of the 23S rRNA. It is important during the early stages of 50S assembly. It makes multiple contacts with different domains of the 23S rRNA in the assembled 50S subunit and ribosome. Functionally, forms part of the polypeptide exit tunnel. This chain is Large ribosomal subunit protein uL4, found in Streptococcus thermophilus (strain CNRZ 1066).